Here is a 753-residue protein sequence, read N- to C-terminus: 5-methyltetrahydropteroyltriglutamate--homocysteine methyltransferase (753 aa).

5-methyltetrahydropteroyltri-L-glutamate-binding positions include arginine 17–lysine 20 and lysine 117. L-homocysteine contacts are provided by residues isoleucine 431–serine 433 and glutamate 484. L-methionine-binding positions include isoleucine 431–serine 433 and glutamate 484. 5-methyltetrahydropteroyltri-L-glutamate contacts are provided by residues arginine 515–cysteine 516 and tryptophan 561. L-homocysteine is bound at residue aspartate 599. Aspartate 599 provides a ligand contact to L-methionine. Position 605 (glutamate 605) interacts with 5-methyltetrahydropteroyltri-L-glutamate. The Zn(2+) site is built by histidine 641, cysteine 643, and glutamate 665. The Proton donor role is filled by histidine 694. A Zn(2+)-binding site is contributed by cysteine 726.

This sequence belongs to the vitamin-B12 independent methionine synthase family. Requires Zn(2+) as cofactor.

The enzyme catalyses 5-methyltetrahydropteroyltri-L-glutamate + L-homocysteine = tetrahydropteroyltri-L-glutamate + L-methionine. It participates in amino-acid biosynthesis; L-methionine biosynthesis via de novo pathway; L-methionine from L-homocysteine (MetE route): step 1/1. In terms of biological role, catalyzes the transfer of a methyl group from 5-methyltetrahydrofolate to homocysteine resulting in methionine formation. This is 5-methyltetrahydropteroyltriglutamate--homocysteine methyltransferase from Escherichia fergusonii (strain ATCC 35469 / DSM 13698 / CCUG 18766 / IAM 14443 / JCM 21226 / LMG 7866 / NBRC 102419 / NCTC 12128 / CDC 0568-73).